The chain runs to 147 residues: Small ribosomal subunit protein uS5 (147 aa).

An S5 DRBM domain is found at 9–72 (FEEVIVDIGR…DDAFKNIIHV (64 aa)).

This sequence belongs to the universal ribosomal protein uS5 family. In terms of assembly, part of the 30S ribosomal subunit. Contacts proteins S4 and S8.

With S4 and S12 plays an important role in translational accuracy. In terms of biological role, located at the back of the 30S subunit body where it stabilizes the conformation of the head with respect to the body. The chain is Small ribosomal subunit protein uS5 from Campylobacter curvus (strain 525.92).